The primary structure comprises 487 residues: Histamine H1 receptor (487 aa).

Topologically, residues 1–29 (MSLPNSSCLLEDKMCEGNKTTMASPQLMP) are extracellular. Residues N5 and N18 are each glycosylated (N-linked (GlcNAc...) asparagine). The helical transmembrane segment at 30–50 (LVVVLSTICLVTVGLNLLVLY) threads the bilayer. The Cytoplasmic portion of the chain corresponds to 51–64 (AVRSERKLHTVGNL). A helical transmembrane segment spans residues 65–89 (YIVSLSVADLIVGAVVMPMNILYLL). Over 90–97 (MSKWSLGR) the chain is Extracellular. Residues 98 to 123 (PLCLFWLSMDYVASTASIFSVFILCI) traverse the membrane as a helical segment. Residues C100 and C180 are joined by a disulfide bond. Residues D107 and T112 each coordinate histamine. The tract at residues 107 to 112 (DYVAST) is important for agonist binding. The Cytoplasmic segment spans residues 124–144 (DRYRSVQQPLRYLKYRTKTRA). A phosphothreonine mark is found at T140 and T142. Residues 145-164 (SATILGAWFLSFLWVIPILG) traverse the membrane as a helical segment. Residues 165–188 (WNHFMQQTSVRREDKCETDFYDVT) are Extracellular-facing. Residues 189-211 (WFKVMTAIINFYLPTLLMLWFYA) traverse the membrane as a helical segment. N198 contributes to the histamine binding site. Residues 212-416 (KIYKAVRQHC…MNRERKAAKQ (205 aa)) are Cytoplasmic-facing. Residue S230 is modified to Phosphoserine. The segment covering 238–261 (KLRPENPKGDAKKPGKESPWEVLK) has biased composition (basic and acidic residues). The segment at 238 to 292 (KLRPENPKGDAKKPGKESPWEVLKRKPKDAGGGSVLKSPSQTXKEMKSPVVFSQE) is disordered. A Phosphothreonine modification is found at T279. A phosphoserine mark is found at S344 and S347. Residues 345–379 (EISEDQMLGDSQSFSRTDSDTTTETAPGKGKLRSG) are disordered. The span at 353–369 (GDSQSFSRTDSDTTTET) shows a compositional bias: polar residues. Residues S380, S396, and S398 each carry the phosphoserine modification. The helical transmembrane segment at 417-440 (LGFIMAAFILCWIPYFIFFMVIAF) threads the bilayer. The interval 424 to 428 (FILCW) is important for agonist binding. Histamine is bound at residue Y431. C441 and C444 form a disulfide bridge. Residues 441–446 (CKNCCN) are Extracellular-facing. Residues 447–469 (EHLHMFTIWLGYINSTLNPLIYP) form a helical membrane-spanning segment. Residues 470–487 (LCNENFKKTFKRILHIRS) lie on the Cytoplasmic side of the membrane.

The protein belongs to the G-protein coupled receptor 1 family. Phosphorylation at sites in the second and third cytoplasmic loops independently contribute to agonist-induced receptor down-regulation.

The protein localises to the cell membrane. G-protein-coupled receptor for histamine, a biogenic amine that functions as an immune modulator and a neurotransmitter. Through the H1 receptor, histamine mediates the contraction of smooth muscles and increases capillary permeability due to contraction of terminal venules. Also mediates neurotransmission in the central nervous system and thereby regulates circadian rhythms, emotional and locomotor activities as well as cognitive functions. The chain is Histamine H1 receptor from Pan troglodytes (Chimpanzee).